We begin with the raw amino-acid sequence, 106 residues long: Large ribosomal subunit protein uL24 (106 aa).

It belongs to the universal ribosomal protein uL24 family. As to quaternary structure, part of the 50S ribosomal subunit.

Its function is as follows. One of two assembly initiator proteins, it binds directly to the 5'-end of the 23S rRNA, where it nucleates assembly of the 50S subunit. In terms of biological role, one of the proteins that surrounds the polypeptide exit tunnel on the outside of the subunit. The chain is Large ribosomal subunit protein uL24 from Parabacteroides distasonis (strain ATCC 8503 / DSM 20701 / CIP 104284 / JCM 5825 / NCTC 11152).